A 149-amino-acid chain; its full sequence is Flagellar assembly factor FliW (149 aa).

It belongs to the FliW family. Interacts with translational regulator CsrA and flagellin(s).

The protein resides in the cytoplasm. Its function is as follows. Acts as an anti-CsrA protein, binds CsrA and prevents it from repressing translation of its target genes, one of which is flagellin. Binds to flagellin and participates in the assembly of the flagellum. In Thermotoga neapolitana (strain ATCC 49049 / DSM 4359 / NBRC 107923 / NS-E), this protein is Flagellar assembly factor FliW.